The primary structure comprises 226 residues: ATP-dependent dethiobiotin synthetase BioD (226 aa).

Residue 12–17 (DAGKTV) participates in ATP binding. Position 16 (Thr16) interacts with Mg(2+). The active site involves Lys39. Ser43 contacts substrate. ATP is bound by residues Asp47, 108 to 111 (EGVG), 168 to 169 (NC), 200 to 202 (PYL), and Asn207. Mg(2+) contacts are provided by Asp47 and Glu108.

It belongs to the dethiobiotin synthetase family. As to quaternary structure, homodimer. Mg(2+) is required as a cofactor.

Its subcellular location is the cytoplasm. It catalyses the reaction (7R,8S)-7,8-diammoniononanoate + CO2 + ATP = (4R,5S)-dethiobiotin + ADP + phosphate + 3 H(+). The catalysed reaction is (7R,8S)-8-amino-7-(carboxyamino)nonanoate + ATP = (4R,5S)-dethiobiotin + ADP + phosphate + H(+). It participates in cofactor biosynthesis; biotin biosynthesis; biotin from 7,8-diaminononanoate: step 1/2. Its function is as follows. Catalyzes a mechanistically unusual reaction, the ATP-dependent insertion of CO2 between the N7 and N8 nitrogen atoms of 7,8-diaminopelargonic acid (DAPA, also called 7,8-diammoniononanoate) to form a ureido ring. This cyanobacterium does not encode bioA (which catalyzes the formation of the precursor for this reaction in the cannonical pathway), instead it encodes bioU, which replaces bioA and also performs the first half of the cannonical BioD reaction. Thus in this organism BioD has a different substrate. In Cyanothece sp. (strain PCC 7425 / ATCC 29141), this protein is ATP-dependent dethiobiotin synthetase BioD.